A 356-amino-acid polypeptide reads, in one-letter code: Alanine racemase (356 aa).

Lys-35 functions as the Proton acceptor; specific for D-alanine in the catalytic mechanism. The residue at position 35 (Lys-35) is an N6-(pyridoxal phosphate)lysine. Arg-130 serves as a coordination point for substrate. Tyr-253 serves as the catalytic Proton acceptor; specific for L-alanine. Met-301 lines the substrate pocket.

The protein belongs to the alanine racemase family. The cofactor is pyridoxal 5'-phosphate.

The enzyme catalyses L-alanine = D-alanine. It participates in amino-acid biosynthesis; D-alanine biosynthesis; D-alanine from L-alanine: step 1/1. Catalyzes the interconversion of L-alanine and D-alanine. May also act on other amino acids. The polypeptide is Alanine racemase (alr) (Erwinia tasmaniensis (strain DSM 17950 / CFBP 7177 / CIP 109463 / NCPPB 4357 / Et1/99)).